We begin with the raw amino-acid sequence, 367 residues long: Phosphoribosylaminoimidazole-succinocarboxamide synthase (367 aa).

It belongs to the SAICAR synthetase family.

It catalyses the reaction 5-amino-1-(5-phospho-D-ribosyl)imidazole-4-carboxylate + L-aspartate + ATP = (2S)-2-[5-amino-1-(5-phospho-beta-D-ribosyl)imidazole-4-carboxamido]succinate + ADP + phosphate + 2 H(+). It functions in the pathway purine metabolism; IMP biosynthesis via de novo pathway; 5-amino-1-(5-phospho-D-ribosyl)imidazole-4-carboxamide from 5-amino-1-(5-phospho-D-ribosyl)imidazole-4-carboxylate: step 1/2. This chain is Phosphoribosylaminoimidazole-succinocarboxamide synthase, found in Shewanella baltica (strain OS195).